The chain runs to 173 residues: RNA pyrophosphohydrolase (173 aa).

The Nudix hydrolase domain occupies 11–164 (PYRRSVGILV…KKHVYMKIVN (154 aa)). Residues 52-73 (GGIDENEEPLDAARRELYEETG) carry the Nudix box motif.

Belongs to the Nudix hydrolase family. RppH subfamily. It depends on a divalent metal cation as a cofactor.

Its function is as follows. Accelerates the degradation of transcripts by removing pyrophosphate from the 5'-end of triphosphorylated RNA, leading to a more labile monophosphorylated state that can stimulate subsequent ribonuclease cleavage. This chain is RNA pyrophosphohydrolase, found in Bartonella henselae (strain ATCC 49882 / DSM 28221 / CCUG 30454 / Houston 1) (Rochalimaea henselae).